Reading from the N-terminus, the 935-residue chain is Isoleucine--tRNA ligase (935 aa).

The 'HIGH' region signature appears at proline 58–histidine 68. Position 558 (glutamate 558) interacts with L-isoleucyl-5'-AMP. Positions lysine 599–serine 603 match the 'KMSKS' region motif. Lysine 602 serves as a coordination point for ATP. Positions 897, 900, 917, and 920 each coordinate Zn(2+).

This sequence belongs to the class-I aminoacyl-tRNA synthetase family. IleS type 1 subfamily. Monomer. Zn(2+) serves as cofactor.

Its subcellular location is the cytoplasm. It catalyses the reaction tRNA(Ile) + L-isoleucine + ATP = L-isoleucyl-tRNA(Ile) + AMP + diphosphate. Its function is as follows. Catalyzes the attachment of isoleucine to tRNA(Ile). As IleRS can inadvertently accommodate and process structurally similar amino acids such as valine, to avoid such errors it has two additional distinct tRNA(Ile)-dependent editing activities. One activity is designated as 'pretransfer' editing and involves the hydrolysis of activated Val-AMP. The other activity is designated 'posttransfer' editing and involves deacylation of mischarged Val-tRNA(Ile). The polypeptide is Isoleucine--tRNA ligase (Francisella philomiragia subsp. philomiragia (strain ATCC 25017 / CCUG 19701 / FSC 153 / O#319-036)).